The chain runs to 330 residues: Aspartate--ammonia ligase (330 aa).

Belongs to the class-II aminoacyl-tRNA synthetase family. AsnA subfamily.

Its subcellular location is the cytoplasm. The catalysed reaction is L-aspartate + NH4(+) + ATP = L-asparagine + AMP + diphosphate + H(+). The protein operates within amino-acid biosynthesis; L-asparagine biosynthesis; L-asparagine from L-aspartate (ammonia route): step 1/1. In Haemophilus influenzae (strain ATCC 51907 / DSM 11121 / KW20 / Rd), this protein is Aspartate--ammonia ligase.